We begin with the raw amino-acid sequence, 317 residues long: Alkylsulfatase (317 aa).

H78 serves as a coordination point for substrate. 2 residues coordinate Fe cation: H105 and D107. Position 108 (V108) interacts with substrate. Position 132 (T132) interacts with 2-oxoglutarate. H261 is a Fe cation binding site. 2-oxoglutarate contacts are provided by R272 and R276.

It belongs to the TfdA dioxygenase family. In terms of assembly, homotetramer. It depends on Fe(2+) as a cofactor.

In terms of biological role, alpha-ketoglutarate-dependent dioxygenase that in vitro catalyzes the oxygenolytic release of sulfite from hexylsulfate. This chain is Alkylsulfatase, found in Acinetobacter baylyi (strain ATCC 33305 / BD413 / ADP1).